Reading from the N-terminus, the 191-residue chain is MRYLRSSLFLFLLLLLVTGLAYPLLTTVLAQWLFPTQANGSLIYRDNAVVGSSLIGQSFSRTGYFQGRPSATSDAPYNALASGGSNLAASNPALDKQIGERAAYWHQAVSNQQPIPAELLTASGSGLDPQISPEAARYQALYVAQARGMSLQQIQQLIDRFTETSKPTFIGQPTVNVLLLNLALDEEKPLP.

A helical transmembrane segment spans residues 8–28 (LFLFLLLLLVTGLAYPLLTTV).

Belongs to the KdpC family. As to quaternary structure, the system is composed of three essential subunits: KdpA, KdpB and KdpC.

It is found in the cell inner membrane. In terms of biological role, part of the high-affinity ATP-driven potassium transport (or Kdp) system, which catalyzes the hydrolysis of ATP coupled with the electrogenic transport of potassium into the cytoplasm. This subunit acts as a catalytic chaperone that increases the ATP-binding affinity of the ATP-hydrolyzing subunit KdpB by the formation of a transient KdpB/KdpC/ATP ternary complex. The sequence is that of Potassium-transporting ATPase KdpC subunit from Pectobacterium atrosepticum (strain SCRI 1043 / ATCC BAA-672) (Erwinia carotovora subsp. atroseptica).